The primary structure comprises 776 residues: MAGKAVLKGKGGGPPRRASKVAPKKTRQLRVQMPNGLVLMRMLGVLWHALTGTARSPVLKAFWKVVPLKQATLALRKIKRTVSTLMVGLHRRGSRRTTIDWMTPLLITVMLGMCLTATVRRERDGSMVIRAEGRDAATQVRVENGTCVILATDMGSWCDDSLAYECVTIDQGEEPVDVDCFCRGVEKVTLEYGRCGRREGSRSRRSVLIPSHAQRDLTGRGHQWLEGEAVKAHLTRVEGWVWKNKLFTLSLVMVAWLMVDGLLPRILIVVVALALVPAYASRCTHLENRDFVTGVQGTTRLTLVLELGGCVTVTADGKPSLDVWLDSIYQESPAQTREYCLHAKLTGTKVAARCPTMGPATLPEEHQSGTVCKRDQSDRGWGNHCGLFGKGSIVTCVKFTCEDKKKATGHVYDVNKITYTIKVEPHTGEFVAANETHSGRKSASFTVSSEKTILTLGDYGDVSLLCRVASGVDLAQTVVLALDKTHEHLPTAWQVHRDWFNDLALPWKHDGAEAWNEAGRLVEFGTPHAVKMDVFNLGDQTGVLLKSLAGVPVASIEGTKYHLKSGHVTCEVGLEKLKMKGLTYTVCDKTKFTWKRAPTDSGHDTVVMEVGFSGTRPCRIPVRAVAHGVPEVNVAMLITPNPTMENNGGGFIEMQLPPGDNIIYVGDLNHQWFQKGSSIGRVLQKTRKGIERLTVLGEHAWDFGSVGGVMTSIGRAMHTVLGGAFNTLLGGVGFLPKILLGVAMAWLGLNMRNPTLSMGFLLSGGLVLAMTLGVGA.

Residues 1-27 (MAGKAVLKGKGGGPPRRASKVAPKKTR) form a disordered region. The Cytoplasmic portion of the chain corresponds to 1–98 (MAGKAVLKGK…LHRRGSRRTT (98 aa)). The segment covering 17-27 (RASKVAPKKTR) has biased composition (basic residues). Residues 33–68 (MPNGLVLMRMLGVLWHALTGTARSPVLKAFWKVVPL) are hydrophobic; homodimerization of capsid protein C. The propeptide at 97 to 117 (TTIDWMTPLLITVMLGMCLTA) is ER anchor for the protein C, removed in mature form by serine protease NS3. A helical transmembrane segment spans residues 99-117 (IDWMTPLLITVMLGMCLTA). At 118-242 (TVRRERDGSM…HLTRVEGWVW (125 aa)) the chain is on the extracellular side. Asparagine 144 carries an N-linked (GlcNAc...) asparagine; by host glycan. A helical membrane pass occupies residues 243–260 (KNKLFTLSLVMVAWLMVD). Glycine 261 is a topological domain (cytoplasmic). The chain crosses the membrane as a helical span at residues 262–280 (LLPRILIVVVALALVPAYA). Topologically, residues 281-727 (SRCTHLENRD…HTVLGGAFNT (447 aa)) are extracellular. 4 disulfides stabilise this stretch: cysteine 283/cysteine 310, cysteine 340/cysteine 396, cysteine 354/cysteine 385, and cysteine 372/cysteine 401. N-linked (GlcNAc...) asparagine; by host glycosylation occurs at asparagine 434. Disulfide bonds link cysteine 466–cysteine 570 and cysteine 587–cysteine 618. The helical intramembrane region spans 728 to 748 (LLGGVGFLPKILLGVAMAWLG). Topologically, residues 749–755 (LNMRNPT) are extracellular. Positions 756-776 (LSMGFLLSGGLVLAMTLGVGA) form an intramembrane region, helical.

Post-translationally, specific enzymatic cleavages in vivo yield mature proteins Peptide 2K acts as a signal sequence and is removed from the N-terminus of NS4B by the host signal peptidase in the ER lumen. Signal cleavage at the 2K-4B site requires a prior NS3 protease-mediated cleavage at the 4A-2K site.

The protein localises to the virion. The protein resides in the secreted. It localises to the virion membrane. Its subcellular location is the host endoplasmic reticulum membrane. Its function is as follows. Capsid protein C self-assembles to form an icosahedral capsid about 30 nm in diameter. The capsid encapsulates the genomic RNA. In terms of biological role, prM acts as a chaperone for envelope protein E during intracellular virion assembly by masking and inactivating envelope protein E fusion peptide. prM is matured in the last step of virion assembly, presumably to avoid catastrophic activation of the viral fusion peptide induced by the acidic pH of the trans-Golgi network. After cleavage by host furin, the pr peptide is released in the extracellular medium and small envelope protein M and envelope protein E homodimers are dissociated. Envelope protein E binding to host cell surface receptor is followed by virus internalization through clathrin-mediated endocytosis. Envelope protein E is subsequently involved in membrane fusion between virion and host late endosomes. Synthesized as a homodimer with prM which acts as a chaperone for envelope protein E. After cleavage of prM, envelope protein E dissociate from small envelope protein M and homodimerizes. The polypeptide is Genome polyprotein (Homo sapiens (Human)).